A 144-amino-acid polypeptide reads, in one-letter code: MELNNLKPAAGAKHAKRRVGRGIGSGLGKTAGRGHKGQKSRSGGFHKVGFEGGQMPLQRRLPKRGFTSLTKEFVGEVRLSDLEKLPVDEIDLLALKQAGLVGELTKSAKIIATGELKRKIVVKGLGATKGARAAIEAAGGSFAE.

The disordered stretch occupies residues Met-1–Pro-56. Positions Arg-21–Ala-31 are enriched in gly residues.

It belongs to the universal ribosomal protein uL15 family. As to quaternary structure, part of the 50S ribosomal subunit.

Binds to the 23S rRNA. The protein is Large ribosomal subunit protein uL15 of Burkholderia cenocepacia (strain HI2424).